The sequence spans 147 residues: MVHFTAEEKAIIMSLWGKVNIEEAGGEALGRLLVVYPWTQRFFETFGNLSSASAIMGNPKVKAHGKKVLTSFGEAVKNMDNLKGAFAKLSELHCDKLHVDPENFKLLGNVMVIILATHFGKEFTPDVQAAWQKLVSGVATALAHKYH.

One can recognise a Globin domain in the interval 3 to 147 (HFTAEEKAII…VATALAHKYH (145 aa)). A phosphoserine mark is found at serine 14 and serine 51. Residues histidine 64 and histidine 93 each coordinate heme b.

This sequence belongs to the globin family. Heterotetramer of two alpha chains and two epsilon chains in early embryonic hemoglobin Gower-2; two zeta chains and two epsilon chains in early embryonic hemoglobin Gower-1. As to expression, red blood cells.

Functionally, the epsilon chain is a beta-type chain of early mammalian embryonic hemoglobin. The sequence is that of Hemoglobin subunit epsilon (HBE1) from Otolemur crassicaudatus (Brown greater galago).